Here is a 981-residue protein sequence, read N- to C-terminus: Polyhomeotic-like protein 3 (981 aa).

Over residues 1–28 (MDSEPSSGTSVSTTASSTTTTTITTSSS) the composition is skewed to low complexity. Disordered stretches follow at residues 1–33 (MDSE…MQQP), 102–127 (LSSG…TSIL), 224–280 (LSSS…TAVT), and 307–407 (QIPL…SQSP). A compositionally biased stretch (polar residues) spans 224-255 (LSSSQNGSPKSAGQTQSLTICHNKTTVTSSKI). Phosphoserine is present on residues S231, S261, S269, and S312. Residues 256 to 266 (SQRDPSPESKK) show a composition bias toward basic and acidic residues. Over residues 321-340 (QLLLQQQQQQIQPITLQSPS) the composition is skewed to low complexity. Residues 360-373 (APSNAQPQHCSPVQ) are compositionally biased toward polar residues. Positions 381 to 395 (VSPNQAQSAQQSVVV) are enriched in low complexity. Phosphothreonine occurs at positions 607 and 612. A Phosphoserine modification is found at S614. The disordered stretch occupies residues 650–690 (KSPSDPTHASAPAPPLLIPAASTRSSSTSLASSTPSLENKP). Positions 667 to 686 (IPAASTRSSSTSLASSTPSL) are enriched in low complexity. Residues K689 and K730 each participate in a glycyl lysine isopeptide (Lys-Gly) (interchain with G-Cter in SUMO2) cross-link. Residues 689 to 718 (KPPQAIVKPQILTHVIEGFVIQEGLEPFPV) carry the HD1 motif. Residues S759 and S760 each carry the phosphoserine modification. The FCS-type zinc-finger motif lies at 774–808 (EEMDSELLKCEFCGKMGYPNEFLRSKRFCTMSCAK). C783, C786, C802, and C806 together coordinate Zn(2+). A Glycyl lysine isopeptide (Lys-Gly) (interchain with G-Cter in SUMO2) cross-link involves residue K808. 2 disordered regions span residues 825–844 (RKPD…GPEG) and 863–888 (EDVA…ERER). The region spanning 917–981 (WTVDDVWAFI…CARINSLKDS (65 aa)) is the SAM domain.

Component of a PRC1-like complex. As to expression, ubiquitous expression.

It is found in the nucleus. Functionally, component of a Polycomb group (PcG) multiprotein PRC1-like complex, a complex class required to maintain the transcriptionally repressive state of many genes, including Hox genes, throughout development. PcG PRC1 complex acts via chromatin remodeling and modification of histones; it mediates monoubiquitination of histone H2A 'Lys-119', rendering chromatin heritably changed in its expressibility. This Mus musculus (Mouse) protein is Polyhomeotic-like protein 3 (Phc3).